The sequence spans 333 residues: Glycerol-3-phosphate dehydrogenase [NAD(P)+] (333 aa).

4 residues coordinate NADPH: Ser-13, Trp-14, Arg-34, and Lys-108. Sn-glycerol 3-phosphate contacts are provided by Lys-108, Gly-137, and Ser-139. NADPH is bound at residue Ala-141. Residues Lys-192, Asp-245, Ser-255, Arg-256, and Asn-257 each contribute to the sn-glycerol 3-phosphate site. The Proton acceptor role is filled by Lys-192. Residue Arg-256 coordinates NADPH. An NADPH-binding site is contributed by Glu-282.

The protein belongs to the NAD-dependent glycerol-3-phosphate dehydrogenase family.

It localises to the cytoplasm. The enzyme catalyses sn-glycerol 3-phosphate + NAD(+) = dihydroxyacetone phosphate + NADH + H(+). It carries out the reaction sn-glycerol 3-phosphate + NADP(+) = dihydroxyacetone phosphate + NADPH + H(+). Its pathway is membrane lipid metabolism; glycerophospholipid metabolism. Its function is as follows. Catalyzes the reduction of the glycolytic intermediate dihydroxyacetone phosphate (DHAP) to sn-glycerol 3-phosphate (G3P), the key precursor for phospholipid synthesis. This Thioalkalivibrio sulfidiphilus (strain HL-EbGR7) protein is Glycerol-3-phosphate dehydrogenase [NAD(P)+].